A 246-amino-acid chain; its full sequence is Ribosomal RNA small subunit methyltransferase G (246 aa).

S-adenosyl-L-methionine-binding positions include G81, F86, 137 to 138 (AE), and R156. The tract at residues 221-246 (LVLIRKERPTPKAYPRRAGVPAKSPL) is disordered.

This sequence belongs to the methyltransferase superfamily. RNA methyltransferase RsmG family.

Its subcellular location is the cytoplasm. Functionally, specifically methylates the N7 position of a guanine in 16S rRNA. This is Ribosomal RNA small subunit methyltransferase G from Symbiobacterium thermophilum (strain DSM 24528 / JCM 14929 / IAM 14863 / T).